Reading from the N-terminus, the 311-residue chain is tRNA-cytidine(32) 2-sulfurtransferase (311 aa).

The PP-loop motif signature appears at Ser47–Ser52. 3 residues coordinate [4Fe-4S] cluster: Cys122, Cys125, and Cys213.

This sequence belongs to the TtcA family. As to quaternary structure, homodimer. It depends on Mg(2+) as a cofactor. [4Fe-4S] cluster is required as a cofactor.

Its subcellular location is the cytoplasm. The enzyme catalyses cytidine(32) in tRNA + S-sulfanyl-L-cysteinyl-[cysteine desulfurase] + AH2 + ATP = 2-thiocytidine(32) in tRNA + L-cysteinyl-[cysteine desulfurase] + A + AMP + diphosphate + H(+). It participates in tRNA modification. In terms of biological role, catalyzes the ATP-dependent 2-thiolation of cytidine in position 32 of tRNA, to form 2-thiocytidine (s(2)C32). The sulfur atoms are provided by the cysteine/cysteine desulfurase (IscS) system. The sequence is that of tRNA-cytidine(32) 2-sulfurtransferase from Escherichia coli O139:H28 (strain E24377A / ETEC).